Reading from the N-terminus, the 506-residue chain is Histidine ammonia-lyase (506 aa).

A cross-link (5-imidazolinone (Ala-Gly)) is located at residues alanine 143–glycine 145. Serine 144 is subject to 2,3-didehydroalanine (Ser).

The protein belongs to the PAL/histidase family. Post-translationally, contains an active site 4-methylidene-imidazol-5-one (MIO), which is formed autocatalytically by cyclization and dehydration of residues Ala-Ser-Gly.

Its subcellular location is the cytoplasm. It carries out the reaction L-histidine = trans-urocanate + NH4(+). It functions in the pathway amino-acid degradation; L-histidine degradation into L-glutamate; N-formimidoyl-L-glutamate from L-histidine: step 1/3. The sequence is that of Histidine ammonia-lyase from Salmonella typhi.